The chain runs to 233 residues: Small ribosomal subunit protein uS2 (233 aa).

This sequence belongs to the universal ribosomal protein uS2 family.

The chain is Small ribosomal subunit protein uS2 from Clostridium botulinum (strain Eklund 17B / Type B).